The primary structure comprises 604 residues: MLPYQDKVGAFYKDNARANSTKLSLVTEGHGGRRPPYLLFVLLILLVGILALLAITGVRFHQVSTSNMEFSRLLKEDMEKSEAVHHQVIDVLTPLFKIIGDEIGLRLPQKLNEIKQFILQKTNFFNPNREFDFRDLHWCINPPSTVKVNFTNYCESIGIRKAIASAANPILLSALSGGRGDIFPPHRCSGATTSVGKVFPLSVSLSMSLISRTSEVINMLTAISDGVYGKTYLLVPDDIEREFDTREIRVFEIGFIKRWLNDMPLLQTTNYMVLPKNSKAKVCTIAVGELTLASLCVEESTVLLYHDSSGSQDGILVVTLGIFWATPMDHIEEVIPVAHPSMKKIHITNHRGFIKDSIATWMVPALASEKQEEQKGCLESACQRKTYPMCNQASWEPFGGRQLPSYGRLTLPLDASVDLQLNISFTYGPVILNGDGMDYYESPLLNSGWLTIPPKDGTISGLINKAGRGDQFTVLPHVLTFAPRESSGNCYLPIQTSQIRDRDVLIESNIVVLPTQSIRYVIATYDISRSDHAIVYYVYDPIRTISYTHPFRLTTKGRPDFLRIECFVWDDNLWCHQFYRFEADIANSTTSVENLVRIRFSCNR.

Over 1–37 the chain is Intravirion; the sequence is MLPYQDKVGAFYKDNARANSTKLSLVTEGHGGRRPPY. The helical transmembrane segment at 38–58 threads the bilayer; it reads LLFVLLILLVGILALLAITGV. Topologically, residues 59–604 are virion surface; that stretch reads RFHQVSTSNM…LVRIRFSCNR (546 aa). Asn149, Asn422, and Asn587 each carry an N-linked (GlcNAc...) asparagine; by host glycan.

The protein belongs to the paramyxoviruses hemagglutinin-neuraminidase family. Non-sialidase subfamily. In terms of assembly, binds canine SLAMF1 at the cell surface.

It is found in the virion membrane. The protein resides in the host cell membrane. Its function is as follows. Attaches the virus to cell receptors and thereby initiating infection. Binding of H protein to the receptor induces a conformational change that allows the F protein to trigger virion/cell membranes fusion. The cellular receptor might be SLAM, and may explain the lymphotropism of the virus. The protein is Hemagglutinin glycoprotein (H) of Ailuropoda melanoleuca (Giant panda).